Consider the following 318-residue polypeptide: Serine protease 41 (318 aa).

An N-terminal signal peptide occupies residues 1 to 19 (MGARGALLLALLLARAGLG). The propeptide occupies 20–54 (KPGELGALQAGPGAARRPGGGGREEACGHREIHAL). One can recognise a Peptidase S1 domain in the interval 55-297 (VAGGVESARG…YFHWIRRVMS (243 aa)). Residues cysteine 80 and cysteine 96 are joined by a disulfide bond. Residues histidine 95 and aspartate 147 each act as charge relay system in the active site. Cystine bridges form between cysteine 181-cysteine 255, cysteine 215-cysteine 234, and cysteine 245-cysteine 273. Asparagine 211 carries an N-linked (GlcNAc...) asparagine glycan. The Charge relay system role is filled by serine 249. An N-linked (GlcNAc...) asparagine glycan is attached at asparagine 284. The GPI-anchor amidated serine moiety is linked to residue serine 299. A propeptide spans 300-318 (TPRPNPSQLLLLLALLWAP) (removed in mature form).

It belongs to the peptidase S1 family. N-glycosylated.

The protein resides in the cell membrane. The protein is Serine protease 41 of Homo sapiens (Human).